An 868-amino-acid polypeptide reads, in one-letter code: mRNA-capping enzyme (868 aa).

Catalysis depends on lysine 282, which acts as the N6-GMP-lysine intermediate. The mRNA cap 0 methyltransferase domain maps to 594–868; sequence GIYRAQTALI…LFGFICLRKN (275 aa). S-adenosyl-L-methionine is bound by residues lysine 607, glycine 624, aspartate 646, and 710–712; that span reads LFI.

In the N-terminal section; belongs to the dsDNA virus mRNA guanylyltransferase family. This sequence in the C-terminal section; belongs to the class I-like SAM-binding methyltransferase superfamily. mRNA cap 0 methyltransferase family. In terms of assembly, part of the viral DNA-directed RNA polymerase that consists of 8 polII-like subunits (RPB1, RPB2, RPB3, RPB5, RPB6, RPB7, RPB9, RPB10), a capping enzyme and a termination factor.

It localises to the virion. It carries out the reaction a 5'-end triphospho-ribonucleoside in mRNA + H2O = a 5'-end diphospho-ribonucleoside in mRNA + phosphate + H(+). The enzyme catalyses a 5'-end diphospho-ribonucleoside in mRNA + GTP + H(+) = a 5'-end (5'-triphosphoguanosine)-ribonucleoside in mRNA + diphosphate. The catalysed reaction is a 5'-end (5'-triphosphoguanosine)-ribonucleoside in mRNA + S-adenosyl-L-methionine = a 5'-end (N(7)-methyl 5'-triphosphoguanosine)-ribonucleoside in mRNA + S-adenosyl-L-homocysteine. The protein operates within mRNA processing; mRNA capping. Functionally, probably catalyzes the second reaction in the mRNA cap formation pathway. Forms a covalent complex with GTP. The sequence is that of mRNA-capping enzyme from Ornithodoros (relapsing fever ticks).